Here is a 299-residue protein sequence, read N- to C-terminus: UDP-N-acetylenolpyruvoylglucosamine reductase (299 aa).

Positions 28–193 (KVGGPADILA…LSAKFELQAG (166 aa)) constitute an FAD-binding PCMH-type domain. Arg172 is a catalytic residue. Catalysis depends on Ser222, which acts as the Proton donor. The active site involves Glu292.

It belongs to the MurB family. FAD serves as cofactor.

It localises to the cytoplasm. The catalysed reaction is UDP-N-acetyl-alpha-D-muramate + NADP(+) = UDP-N-acetyl-3-O-(1-carboxyvinyl)-alpha-D-glucosamine + NADPH + H(+). Its pathway is cell wall biogenesis; peptidoglycan biosynthesis. Functionally, cell wall formation. The chain is UDP-N-acetylenolpyruvoylglucosamine reductase from Lactococcus lactis subsp. cremoris (strain SK11).